A 314-amino-acid chain; its full sequence is Homoserine O-succinyltransferase (314 aa).

Cys-142 acts as the Acyl-thioester intermediate in catalysis. Residues Lys-163 and Ser-192 each contribute to the substrate site. His-235 acts as the Proton acceptor in catalysis. Glu-237 is a catalytic residue. Arg-249 is a substrate binding site.

Belongs to the MetA family.

It is found in the cytoplasm. It carries out the reaction L-homoserine + succinyl-CoA = O-succinyl-L-homoserine + CoA. The protein operates within amino-acid biosynthesis; L-methionine biosynthesis via de novo pathway; O-succinyl-L-homoserine from L-homoserine: step 1/1. In terms of biological role, transfers a succinyl group from succinyl-CoA to L-homoserine, forming succinyl-L-homoserine. The sequence is that of Homoserine O-succinyltransferase from Aeromonas salmonicida (strain A449).